A 111-amino-acid polypeptide reads, in one-letter code: Ribosome-binding factor A (111 aa).

Belongs to the RbfA family. Monomer. Binds 30S ribosomal subunits, but not 50S ribosomal subunits or 70S ribosomes.

It is found in the cytoplasm. Its function is as follows. One of several proteins that assist in the late maturation steps of the functional core of the 30S ribosomal subunit. Associates with free 30S ribosomal subunits (but not with 30S subunits that are part of 70S ribosomes or polysomes). Required for efficient processing of 16S rRNA. May interact with the 5'-terminal helix region of 16S rRNA. This is Ribosome-binding factor A from Helicobacter pylori (strain J99 / ATCC 700824) (Campylobacter pylori J99).